A 157-amino-acid chain; its full sequence is Ribosome-binding factor A (157 aa).

A disordered region spans residues 127–157; that stretch reads QQQFGSEDASVEDEVLGDDVADDADETEGKD. Over residues 135 to 157 the composition is skewed to acidic residues; it reads ASVEDEVLGDDVADDADETEGKD.

Belongs to the RbfA family. Monomer. Binds 30S ribosomal subunits, but not 50S ribosomal subunits or 70S ribosomes.

It is found in the cytoplasm. One of several proteins that assist in the late maturation steps of the functional core of the 30S ribosomal subunit. Associates with free 30S ribosomal subunits (but not with 30S subunits that are part of 70S ribosomes or polysomes). Required for efficient processing of 16S rRNA. May interact with the 5'-terminal helix region of 16S rRNA. The protein is Ribosome-binding factor A of Shewanella baltica (strain OS155 / ATCC BAA-1091).